Here is a 71-residue protein sequence, read N- to C-terminus: Translation initiation factor IF-1 (71 aa).

The region spanning 1 to 71 (MSKDDLIQFT…LTKGRVIHRH (71 aa)) is the S1-like domain.

The protein belongs to the IF-1 family. In terms of assembly, component of the 30S ribosomal translation pre-initiation complex which assembles on the 30S ribosome in the order IF-2 and IF-3, IF-1 and N-formylmethionyl-tRNA(fMet); mRNA recruitment can occur at any time during PIC assembly.

The protein resides in the cytoplasm. One of the essential components for the initiation of protein synthesis. Stabilizes the binding of IF-2 and IF-3 on the 30S subunit to which N-formylmethionyl-tRNA(fMet) subsequently binds. Helps modulate mRNA selection, yielding the 30S pre-initiation complex (PIC). Upon addition of the 50S ribosomal subunit IF-1, IF-2 and IF-3 are released leaving the mature 70S translation initiation complex. This chain is Translation initiation factor IF-1, found in Rickettsia typhi (strain ATCC VR-144 / Wilmington).